The following is a 450-amino-acid chain: UDP-N-acetylglucosamine--peptide N-acetylglucosaminyltransferase stabilizing protein GtfB (450 aa).

This sequence belongs to the GtfB family. As to quaternary structure, forms a heterotetramer with 2 subunits each of GtfA and GtfB. Part of the accessory SecA2/SecY2 protein translocation apparatus required to export cell wall protein GspB.

Its subcellular location is the cell membrane. It functions in the pathway protein modification; protein glycosylation. Required for polymorphic O-glycosylation of GspB, a serine-rich repeat cell wall protein encoded upstream in the same operon. A substrate-binding protein that is part of the accessory SecA2/SecY2 system specifically required to export GspB. The GtfA-GtfB complex adds GlcNAc from UDP-GlcNAc to GspB, attaching the first sugar residue. Upon coexpression in E.coli with GtfA glycosylates GspB constructs. Binds the GspB protein substrate; alone this subunit only recognizes partially glycosylated GspB, but is constrained by GtfA to also recognize unglycosylated protein. The enzyme probably modifies its tertiary conformation by opening and closing its intersubunit interfaces to accomodate the increasingly glycosylated substrate. The protein is UDP-N-acetylglucosamine--peptide N-acetylglucosaminyltransferase stabilizing protein GtfB of Streptococcus gordonii.